We begin with the raw amino-acid sequence, 616 residues long: Cytochrome c oxidase subunit 1 (616 aa).

A helical transmembrane segment spans residues 28–48 (HLYLISGGFFFLLGGLEALFI). His-72 contacts Fe(II)-heme a. 6 helical membrane-spanning segments follow: residues 75 to 95 (TMIF…VVPL), 102 to 122 (VAFP…GLFL), 158 to 178 (GLQI…VTII), 198 to 218 (FVTS…LIFM), 243 to 263 (LFWV…FGIF), and 275 to 295 (LFGY…GFMV). Residues His-249 and Tyr-253 each coordinate Cu cation. A cross-link (1'-histidyl-3'-tyrosine (His-Tyr)) is located at residues 249 to 253 (HPEVY). Cu cation-binding residues include His-298 and His-299. The next 7 helical transmembrane spans lie at 303–323 (VGMG…IAVP), 349–369 (AVAF…LASA), 380–400 (FVVA…LLAG), 420–440 (ITFW…HFLG), 463–483 (ISTI…INIV), 553–573 (SSFL…GFTY), and 577–597 (AGWG…SMFL). His-384 serves as a coordination point for Fe(II)-heme o. His-384 lines the heme a3 pocket. His-386 contributes to the Fe(II)-heme a binding site.

Belongs to the heme-copper respiratory oxidase family. Cu(2+) serves as cofactor. Heme is required as a cofactor.

The protein localises to the cell membrane. It carries out the reaction 4 Fe(II)-[cytochrome c] + O2 + 8 H(+)(in) = 4 Fe(III)-[cytochrome c] + 2 H2O + 4 H(+)(out). It participates in energy metabolism; oxidative phosphorylation. Its function is as follows. Cytochrome c oxidase is the component of the respiratory chain that catalyzes the reduction of oxygen to water. Subunits 1-3 form the functional core of the enzyme complex. Co I is the catalytic subunit of the enzyme. Electrons originating in cytochrome c are transferred via the copper A center of subunit 2 and heme a of subunit 1 to the bimetallic center formed by heme a3 and copper B. This cytochrome c oxidase shows proton pump activity across the membrane in addition to the electron transfer. The chain is Cytochrome c oxidase subunit 1 (ctaD) from Bacillus sp. (strain PS3).